Consider the following 157-residue polypeptide: AP-1 complex subunit sigma-2 (157 aa).

The protein belongs to the adaptor complexes small subunit family. In terms of assembly, adaptor protein complex 1 (AP-1) is a heterotetramer composed of two large adaptins (gamma-type subunit AP1G1 and beta-type subunit AP1B1), a medium adaptin (mu-type subunit AP1M1 or AP1M2) and a small adaptin (sigma-type subunit AP1S1 or AP1S2 or AP1S3). Binds to MUC1. In terms of tissue distribution, widely expressed.

Its subcellular location is the golgi apparatus. It is found in the cytoplasmic vesicle membrane. It localises to the membrane. The protein localises to the clathrin-coated pit. Its function is as follows. Subunit of clathrin-associated adaptor protein complex 1 that plays a role in protein sorting in the late-Golgi/trans-Golgi network (TGN) and/or endosomes. The AP complexes mediate both the recruitment of clathrin to membranes and the recognition of sorting signals within the cytosolic tails of transmembrane cargo molecules. The chain is AP-1 complex subunit sigma-2 (AP1S2) from Homo sapiens (Human).